We begin with the raw amino-acid sequence, 320 residues long: Olfactory receptor 7C1 (320 aa).

At Met1–Phe25 the chain is on the extracellular side. The N-linked (GlcNAc...) asparagine glycan is linked to Asn5. Residues Ile26–Ile46 traverse the membrane as a helical segment. Residues Leu47–His54 lie on the Cytoplasmic side of the membrane. A helical transmembrane segment spans residues Leu55–Ser75. At Thr76–Ser99 the chain is on the extracellular side. Cys97 and Cys189 are oxidised to a cystine. Residues Gln100–Tyr120 form a helical membrane-spanning segment. At Asp121–Gln139 the chain is on the cytoplasmic side. A helical membrane pass occupies residues Leu140 to Thr160. Over Leu161–Val197 the chain is Extracellular. The helical transmembrane segment at Val198–Ser217 threads the bilayer. Over Tyr218 to Ala237 the chain is Cytoplasmic. The helical transmembrane segment at Phe238–Val258 threads the bilayer. At Tyr259–Ser271 the chain is on the extracellular side. Residues Leu272–Leu292 traverse the membrane as a helical segment. The Cytoplasmic segment spans residues Arg293 to Gly313.

Belongs to the G-protein coupled receptor 1 family.

The protein localises to the cell membrane. Odorant receptor. The protein is Olfactory receptor 7C1 (OR7C1) of Homo sapiens (Human).